A 356-amino-acid chain; its full sequence is Phosphoribosylformylglycinamidine cyclo-ligase (356 aa).

The protein belongs to the AIR synthase family.

It is found in the cytoplasm. It carries out the reaction 2-formamido-N(1)-(5-O-phospho-beta-D-ribosyl)acetamidine + ATP = 5-amino-1-(5-phospho-beta-D-ribosyl)imidazole + ADP + phosphate + H(+). It functions in the pathway purine metabolism; IMP biosynthesis via de novo pathway; 5-amino-1-(5-phospho-D-ribosyl)imidazole from N(2)-formyl-N(1)-(5-phospho-D-ribosyl)glycinamide: step 2/2. The polypeptide is Phosphoribosylformylglycinamidine cyclo-ligase (Nitrobacter hamburgensis (strain DSM 10229 / NCIMB 13809 / X14)).